The chain runs to 322 residues: Thioredoxin reductase (322 aa).

FAD-binding positions include 12-15, 34-42, N51, and V84; these read SGPA and EGAVTAGGA. A disulfide bridge connects residues C136 and C139. Residues H176, R182, and Y259 each coordinate NADP(+). Residues D279 and 286–289 each bind FAD; that span reads RQAI. R286 provides a ligand contact to NADP(+).

It belongs to the class-II pyridine nucleotide-disulfide oxidoreductase family. Homodimer. It depends on FAD as a cofactor.

The enzyme catalyses [thioredoxin]-dithiol + NADP(+) = [thioredoxin]-disulfide + NADPH + H(+). In terms of biological role, component of the thioredoxin-thioredoxin reductase system which may be involved in biosynthesis of penicillins and cephalosporins and may be important in determining the thiol-disulfide redox balance. This is Thioredoxin reductase from Streptomyces clavuligerus.